The following is a 239-amino-acid chain: 7-cyano-7-deazaguanine synthase (239 aa).

8 to 18 provides a ligand contact to ATP; that stretch reads FSGGLDSTASL. 4 residues coordinate Zn(2+): Cys194, Cys209, Cys212, and Cys215.

The protein belongs to the QueC family.

The enzyme catalyses 7-carboxy-7-deazaguanine + NH4(+) + ATP = 7-cyano-7-deazaguanine + ADP + phosphate + H2O + H(+). Its pathway is purine metabolism; 7-cyano-7-deazaguanine biosynthesis. Catalyzes the ATP-dependent conversion of 7-carboxy-7-deazaguanine (CDG) to 7-cyano-7-deazaguanine (preQ(0)). In Pyrococcus abyssi (strain GE5 / Orsay), this protein is 7-cyano-7-deazaguanine synthase.